A 188-amino-acid polypeptide reads, in one-letter code: dCTP deaminase (188 aa).

DCTP-binding positions include 111–116, 135–137, Q156, Y170, and Q180; these read KSTYAR and TLE. Residue E137 is the Proton donor/acceptor of the active site.

This sequence belongs to the dCTP deaminase family. As to quaternary structure, homotrimer.

It catalyses the reaction dCTP + H2O + H(+) = dUTP + NH4(+). Its pathway is pyrimidine metabolism; dUMP biosynthesis; dUMP from dCTP (dUTP route): step 1/2. In terms of biological role, catalyzes the deamination of dCTP to dUTP. The polypeptide is dCTP deaminase (Thiobacillus denitrificans (strain ATCC 25259 / T1)).